The chain runs to 582 residues: Spermatogenesis-associated protein 7 homolog (582 aa).

Disordered stretches follow at residues 167–192 and 251–289; these read LMSG…CDRR and RKDF…EVNI. Composition is skewed to polar residues over residues 169-181 and 262-274; these read SGTQ…SPSR and ETQT…NSEL.

As to quaternary structure, found in a complex with CFAP410, NEK1 and SPATA7. Interacts with NEK1. Interacts with RPGRIP1. Interacts with RPGR. Interacts with NPHP4. Interacts with NPHP1. Interacts with AHI1. As to expression, expressed in the retina (at protein level). Expressed in the choroid region and retinal pigment endothelium, within the photoreceptor layer (at protein level).

Its subcellular location is the cytoplasm. The protein resides in the cytoskeleton. The protein localises to the cilium axoneme. It localises to the cilium basal body. It is found in the cell projection. Its subcellular location is the cilium. The protein resides in the photoreceptor outer segment. In terms of biological role, involved in the maintenance of both rod and cone photoreceptor cells. Required for photoreceptor-specific localization of proximal connecting cilium (CC) proteins RPGR, AHI1, NPHP1, NPHP4, and RPGRIP1 at the distal CC, a photoreceptor-specific extension of the primary cilium transition zone. Maintenance of protein localization at the photoreceptor-specific distal CC is essential for normal microtubule stability and to prevent photoreceptor degeneration. In Mus musculus (Mouse), this protein is Spermatogenesis-associated protein 7 homolog (Spata7).